Reading from the N-terminus, the 520-residue chain is MSIKEEVESRKTFAIISHPDAGKTTLTEKLLLFGGAIREAGTVKGKKSGKFATSDWMKVEQERGISVTSSVMQFDYDHYKINILDTPGHEDFSEDTYRTLMAVDSAVMVIDCAKGIEPQTLKLFKVCKMRGIPIFTFINKLDRVGKEPFELLDEIESTLEIETYPMNWPVGMGQNFFGIIDRESHTIEPFRDEENVLHLNDDYELEEDHAMKNDSAFTQAIEELMLVEEAGETFDNEALLSGDLTPVFFGSALANFGVQNFLNAYVDHAPMPNARQTNEDIEVSPFDLDFSGFIFKIQANMDPKHRDRIAFMRVVSGAFERGMDVTLQRTHKKQKITRSTSFMADDKETVNHAVAGDIIGLYDTGNYQIGDTLVGGNQKFSFQELPQFTPELFMKVSAKNVMKQKHFHKGIEQLVQEGAIQYYKALHTNQIIIGAVGQLQFEVFEHRLKNEYNVDVVMEPVGQKIARWIENEEDIKDKMSTSRSILVKDIYDNYVFLFENEFATRWFEEKFPEIKLYGLL.

A tr-type G domain is found at Glu8 to Thr277. GTP is bound by residues Ser17–Thr24, Asp85–His89, and Asn139–Asp142.

The protein belongs to the TRAFAC class translation factor GTPase superfamily. Classic translation factor GTPase family. PrfC subfamily.

The protein resides in the cytoplasm. Functionally, increases the formation of ribosomal termination complexes and stimulates activities of RF-1 and RF-2. It binds guanine nucleotides and has strong preference for UGA stop codons. It may interact directly with the ribosome. The stimulation of RF-1 and RF-2 is significantly reduced by GTP and GDP, but not by GMP. The protein is Peptide chain release factor 3 of Staphylococcus saprophyticus subsp. saprophyticus (strain ATCC 15305 / DSM 20229 / NCIMB 8711 / NCTC 7292 / S-41).